A 68-amino-acid chain; its full sequence is Large ribosomal subunit protein bL35 (68 aa).

This sequence belongs to the bacterial ribosomal protein bL35 family.

The protein is Large ribosomal subunit protein bL35 of Aster yellows witches'-broom phytoplasma (strain AYWB).